The following is a 295-amino-acid chain: Nucleotide-binding protein RBAM_031990 (295 aa).

Residue 16 to 23 (GMSGAGKT) participates in ATP binding. 67-70 (DLRG) contacts GTP.

Belongs to the RapZ-like family.

Its function is as follows. Displays ATPase and GTPase activities. The chain is Nucleotide-binding protein RBAM_031990 from Bacillus velezensis (strain DSM 23117 / BGSC 10A6 / LMG 26770 / FZB42) (Bacillus amyloliquefaciens subsp. plantarum).